A 369-amino-acid polypeptide reads, in one-letter code: Epoxyqueuosine reductase (369 aa).

Asp-135 serves as the catalytic Proton donor. The 4Fe-4S ferredoxin-type domain occupies 177-209; the sequence is IPLPVDEPSENQCGKCTACITSCPTNAIVAEGV. Residues Cys-189, Cys-192, Cys-195, Cys-199, Cys-215, Cys-242, Cys-245, and Cys-249 each contribute to the [4Fe-4S] cluster site.

It belongs to the QueG family. In terms of assembly, monomer. The cofactor is cob(II)alamin. Requires [4Fe-4S] cluster as cofactor.

The protein resides in the cytoplasm. The enzyme catalyses epoxyqueuosine(34) in tRNA + AH2 = queuosine(34) in tRNA + A + H2O. It functions in the pathway tRNA modification; tRNA-queuosine biosynthesis. Functionally, catalyzes the conversion of epoxyqueuosine (oQ) to queuosine (Q), which is a hypermodified base found in the wobble positions of tRNA(Asp), tRNA(Asn), tRNA(His) and tRNA(Tyr). This Vibrio cholerae serotype O1 (strain ATCC 39315 / El Tor Inaba N16961) protein is Epoxyqueuosine reductase.